A 458-amino-acid chain; its full sequence is Transmembrane protein 135 (458 aa).

6 helical membrane passes run 68–88 (ILQSASFLTANGALFMAFFCI), 96–116 (FYLWSPGFGAALPASYVAILV), 149–169 (TLRNGEVLLFCITAAMYMFFF), 298–318 (FQLGAFLGSFVSIYKGTSCFL), 331–351 (IIAGFLAGVSMMFYKSTTISM), and 380–400 (IIYSISTAICFQAAVMEVQTL).

Belongs to the TMEM135 family.

The protein localises to the mitochondrion membrane. It is found in the peroxisome membrane. Functionally, involved in mitochondrial metabolism by regulating the balance between mitochondrial fusion and fission. May act as a regulator of mitochondrial fission that promotes DNM1L-dependent fission through activation of DNM1L. May be involved in peroxisome organization. This chain is Transmembrane protein 135, found in Bos taurus (Bovine).